The chain runs to 756 residues: NUT family member 2F (756 aa).

Disordered stretches follow at residues 173-200 (GNAR…PDDS), 293-438 (IQKS…TSDP), 511-639 (RAAP…LPGM), and 653-756 (RLSQ…HCSQ). Positions 304-321 (SLPPPAPPRLEPRGPPAP) are enriched in pro residues. The segment covering 417–427 (EGQREKGKVEQ) has biased composition (basic and acidic residues). Polar residues predominate over residues 543-560 (QRVSVETSPPQTAAQDPQ). Positions 654-665 (LSQSPVPSSGLL) are enriched in low complexity. Positions 746–756 (SRRKKKRHCSQ) are enriched in basic residues.

The protein belongs to the NUT family.

This Homo sapiens (Human) protein is NUT family member 2F (NUTM2F).